The primary structure comprises 510 residues: Zinc finger protein 692 (510 aa).

Disordered stretches follow at residues 1–20 (MAAS…RQLD) and 121–306 (WGPS…EDTA). Position 161 is a phosphoserine (S161). A compositionally biased stretch (basic and acidic residues) spans 163–172 (CDERAQEARM). The span at 188–201 (EDGEEEEEDEEEML) shows a compositional bias: acidic residues. At S225 the chain carries Phosphoserine. Residues 237–265 (APAPAAVPAPLASPSSSASSLGSGAPGPV) show a composition bias toward low complexity. A compositionally biased stretch (polar residues) spans 278–297 (QADQQTEPLASPGSQAQSAL). 5 C2H2-type zinc fingers span residues 322–347 (LPCD…KYQH), 353–377 (FSCP…VKLH), 383–405 (YICE…RRIH), 411–433 (LQCE…RRKH), and 442–465 (FPCE…SKSH). S464 bears the Phosphoserine mark.

Belongs to the krueppel C2H2-type zinc-finger protein family. In terms of processing, phosphorylation at Ser-464 results in loss of DNA-binding activity.

The protein localises to the nucleus. Functionally, may act as an transcriptional repressor for PCK1 gene expression, in turn may participate in the hepatic gluconeogenesis regulation through the activated AMPK signaling pathway. The polypeptide is Zinc finger protein 692 (Bos taurus (Bovine)).